A 403-amino-acid chain; its full sequence is Ribosomal RNA large subunit methyltransferase I (403 aa).

Positions 9–88 (YPRLVLSKGR…ESIDIAFFTR (80 aa)) constitute a PUA domain.

The protein belongs to the methyltransferase superfamily. RlmI family.

The protein localises to the cytoplasm. It carries out the reaction cytidine(1962) in 23S rRNA + S-adenosyl-L-methionine = 5-methylcytidine(1962) in 23S rRNA + S-adenosyl-L-homocysteine + H(+). In terms of biological role, specifically methylates the cytosine at position 1962 (m5C1962) of 23S rRNA. This is Ribosomal RNA large subunit methyltransferase I from Salmonella agona (strain SL483).